Here is a 354-residue protein sequence, read N- to C-terminus: Glycerol-1-phosphate dehydrogenase [NAD(P)+] (354 aa).

Residues 103-107 (GRAVD) and 125-128 (TAAS) contribute to the NAD(+) site. Substrate is bound at residue Asp130. Ser134 provides a ligand contact to NAD(+). Asp176 provides a ligand contact to substrate. The Zn(2+) site is built by Asp176 and His255. Substrate is bound at residue His259. His271 is a binding site for Zn(2+).

This sequence belongs to the glycerol-1-phosphate dehydrogenase family. Homodimer. Zn(2+) is required as a cofactor.

The protein localises to the cytoplasm. It catalyses the reaction sn-glycerol 1-phosphate + NAD(+) = dihydroxyacetone phosphate + NADH + H(+). The enzyme catalyses sn-glycerol 1-phosphate + NADP(+) = dihydroxyacetone phosphate + NADPH + H(+). The protein operates within membrane lipid metabolism; glycerophospholipid metabolism. Its function is as follows. Catalyzes the NAD(P)H-dependent reduction of dihydroxyacetonephosphate (DHAP or glycerone phosphate) to glycerol 1-phosphate (G1P). The G1P thus generated is used as the glycerophosphate backbone of phospholipids in the cellular membranes of Archaea. The chain is Glycerol-1-phosphate dehydrogenase [NAD(P)+] from Cenarchaeum symbiosum (strain A).